A 170-amino-acid polypeptide reads, in one-letter code: Regulator of ribonuclease activity A (170 aa).

The protein belongs to the RraA family. Homotrimer. Binds to both RNA-binding sites in the C-terminal region of Rne and to RhlB.

It localises to the cytoplasm. In terms of biological role, globally modulates RNA abundance by binding to RNase E (Rne) and regulating its endonucleolytic activity. Can modulate Rne action in a substrate-dependent manner by altering the composition of the degradosome. Modulates RNA-binding and helicase activities of the degradosome. This chain is Regulator of ribonuclease activity A, found in Psychromonas ingrahamii (strain DSM 17664 / CCUG 51855 / 37).